The following is a 956-amino-acid chain: ATPase 11, plasma membrane-type (956 aa).

The Cytoplasmic portion of the chain corresponds to 1 to 65 (MGDKEEVLEA…EKKESKFLKF (65 aa)). The chain crosses the membrane as a helical span at residues 66–85 (LGFMWNPLSWVMEAAAIMAI). At 86–97 (ALANGGGKPPDW) the chain is on the extracellular side. The helical transmembrane segment at 98 to 118 (QDFVGIITLLVINSTISFIEE) threads the bilayer. Over 119 to 247 (NNAGNAAAAL…GHFQQVLTAI (129 aa)) the chain is Cytoplasmic. The helical transmembrane segment at 248–268 (GNFCICSIAVGMIIEIVVMYP) threads the bilayer. The Extracellular portion of the chain corresponds to 269–277 (IQHRAYRPG). A helical transmembrane segment spans residues 278–295 (IDNLLVLLIGGIPIAMPT). The Cytoplasmic segment spans residues 296–647 (VLSVTMAIGS…TSRAIFQRMK (352 aa)). Residue D333 is the 4-aspartylphosphate intermediate of the active site. Residues D592 and D596 each contribute to the Mg(2+) site. A helical transmembrane segment spans residues 648–669 (NYTIYAVSITIRIVLGFMLLAL). The Extracellular segment spans residues 670–674 (IWKFD). Residues 675–697 (FPPFMVLIIAILNDGTIMTISKD) traverse the membrane as a helical segment. At 698–713 (RVKPSPLPDSWKLSEI) the chain is on the cytoplasmic side. Residues 714 to 734 (FATGVVFGSYMAMMTVIFFWA) traverse the membrane as a helical segment. Over 735–759 (AYKTDFFPRTFGVSTLEKTAHDDFR) the chain is Extracellular. A helical membrane pass occupies residues 760 to 780 (KLASAIYLQVSIISQALIFVT). The Cytoplasmic portion of the chain corresponds to 781–792 (RSRSWSYVERPG). Residues 793-813 (MLLVVAFILAQLVATLIAVYA) traverse the membrane as a helical segment. Topologically, residues 814 to 821 (NWSFAAIE) are extracellular. The helical transmembrane segment at 822-842 (GIGWGWAGVIWLYNIVFYIPL) threads the bilayer. The Cytoplasmic segment spans residues 843–956 (DIIKFLIRYA…IETIQQAYTV (114 aa)). T889 carries the post-translational modification Phosphothreonine. S938 carries the post-translational modification Phosphoserine. Residues 954-956 (YTV) are interaction with 14-3-3 proteins. At T955 the chain carries Phosphothreonine.

This sequence belongs to the cation transport ATPase (P-type) (TC 3.A.3) family. Type IIIA subfamily. In terms of assembly, binds to 14-3-3 proteins. The binding is induced by phosphorylation of Thr-955. Binding to 14-3-3 proteins activates the H(+)-ATPase. In terms of tissue distribution, expressed in guard cells, mesophyll cells, leaves and roots.

Its subcellular location is the membrane. The catalysed reaction is ATP + H2O + H(+)(in) = ADP + phosphate + 2 H(+)(out). Its function is as follows. The plasma membrane H(+) ATPase of plants and fungi generates a proton gradient that drives the active transport of nutrients by H(+)-symport. The resulting external acidification and/or internal alkinization may mediate growth responses. The chain is ATPase 11, plasma membrane-type (AHA11) from Arabidopsis thaliana (Mouse-ear cress).